The chain runs to 161 residues: Cysteine dioxygenase (161 aa).

Residues histidine 75, histidine 77, and histidine 125 each contribute to the Fe cation site.

Belongs to the cysteine dioxygenase family. It depends on Fe cation as a cofactor.

The enzyme catalyses L-cysteine + O2 = 3-sulfino-L-alanine + H(+). The polypeptide is Cysteine dioxygenase (cdoA) (Bacillus subtilis (strain 168)).